The following is a 257-amino-acid chain: 1-(5-phosphoribosyl)-5-[(5-phosphoribosylamino)methylideneamino] imidazole-4-carboxamide isomerase (257 aa).

D8 acts as the Proton acceptor in catalysis. D129 functions as the Proton donor in the catalytic mechanism.

Belongs to the HisA/HisF family.

The protein resides in the cytoplasm. The catalysed reaction is 1-(5-phospho-beta-D-ribosyl)-5-[(5-phospho-beta-D-ribosylamino)methylideneamino]imidazole-4-carboxamide = 5-[(5-phospho-1-deoxy-D-ribulos-1-ylimino)methylamino]-1-(5-phospho-beta-D-ribosyl)imidazole-4-carboxamide. The protein operates within amino-acid biosynthesis; L-histidine biosynthesis; L-histidine from 5-phospho-alpha-D-ribose 1-diphosphate: step 4/9. The polypeptide is 1-(5-phosphoribosyl)-5-[(5-phosphoribosylamino)methylideneamino] imidazole-4-carboxamide isomerase (Crocosphaera subtropica (strain ATCC 51142 / BH68) (Cyanothece sp. (strain ATCC 51142))).